The primary structure comprises 180 residues: ATP-dependent protease subunit HslV (180 aa).

The active site involves T7. G165, C168, and T171 together coordinate Na(+).

The protein belongs to the peptidase T1B family. HslV subfamily. As to quaternary structure, a double ring-shaped homohexamer of HslV is capped on each side by a ring-shaped HslU homohexamer. The assembly of the HslU/HslV complex is dependent on binding of ATP.

It is found in the cytoplasm. It catalyses the reaction ATP-dependent cleavage of peptide bonds with broad specificity.. Its activity is regulated as follows. Allosterically activated by HslU binding. Its function is as follows. Protease subunit of a proteasome-like degradation complex believed to be a general protein degrading machinery. In Bacillus cereus (strain G9842), this protein is ATP-dependent protease subunit HslV.